Reading from the N-terminus, the 213-residue chain is Thymidylate kinase (213 aa).

Position 10 to 17 (10 to 17 (GLEGAGKT)) interacts with ATP.

This sequence belongs to the thymidylate kinase family.

It carries out the reaction dTMP + ATP = dTDP + ADP. Its function is as follows. Phosphorylation of dTMP to form dTDP in both de novo and salvage pathways of dTTP synthesis. This Escherichia fergusonii (strain ATCC 35469 / DSM 13698 / CCUG 18766 / IAM 14443 / JCM 21226 / LMG 7866 / NBRC 102419 / NCTC 12128 / CDC 0568-73) protein is Thymidylate kinase.